Reading from the N-terminus, the 1238-residue chain is Lysine-specific demethylase JMJ703 (1238 aa).

The disordered stretch occupies residues 56–79 (EECQPSAAVSRSDTPCSTSGTQTC). The segment covering 62-79 (AAVSRSDTPCSTSGTQTC) has biased composition (polar residues). The 42-residue stretch at 154-195 (APVFYPTEEEFEDTLKYIESIRPMAEPYGICRIVPPSSWKPP) folds into the JmjN domain. The interval 215–266 (KVDKLQNRKSSKKGRRGGMMKRRKLAESEENSATAHTQTGMQQSPERFGFEP) is disordered. Positions 221–238 (NRKSSKKGRRGGMMKRRK) are enriched in basic residues. Positions 245 to 259 (NSATAHTQTGMQQSP) are enriched in polar residues. Residues 348-514 (KYAQSGWNLN…IGHNAVELYR (167 aa)) form the JmjC domain. Positions 394, 396, and 482 each coordinate Fe cation. Disordered stretches follow at residues 699-725 (GPRRSYMSQASAVSLVSSSTSNEQKDE), 777-798 (YNGGLGGHKGSAPGLPVSSSPS), 834-863 (TGDSRSLLGEHHNRSPAMIHDGTNMKSSLE), and 910-978 (ASSQ…LQRT). Residues 706 to 719 (SQASAVSLVSSSTS) are compositionally biased toward low complexity. The span at 910-923 (ASSQQFVRTGPWTQ) shows a compositional bias: polar residues. Over residues 924–936 (SASHEASSPSTSA) the composition is skewed to low complexity. Residues 964–978 (SFSNQQPNDGRLQRT) show a composition bias toward polar residues. Positions 1019–1077 (VVHRFKCSVEPLEIGVVLSGRLWSSSQAIFPKGFRSRVKYFSIVDPIQMAYYISEILDA) constitute an FYR N-terminal domain. The FYR C-terminal domain occupies 1079 to 1169 (MQGPLFMVKL…HICTEYWRSR (91 aa)).

It depends on Fe(2+) as a cofactor. In terms of tissue distribution, expressed in roots, leaf sheaths, stems and panicles.

The protein localises to the nucleus. The catalysed reaction is N(6),N(6),N(6)-trimethyl-L-lysyl(4)-[histone H3] + 3 2-oxoglutarate + 3 O2 = L-lysyl(4)-[histone H3] + 3 formaldehyde + 3 succinate + 3 CO2. Its function is as follows. Histone demethylase that demethylates 'Lys-4' (H3K4me) of histone H3 with a specific activity for H3K4me3, H3K4me2 and H3K4me1. No activity on H3K9me3/2/1, H3K27me3/2/1 and H3K36me3/2/1. Involved in the control of stem elongation by regulating methylation states of H3K4me3 on cytokinin oxidase (CKX) gene family, which may cause increased expression of CKX genes and reduced cytokinin levels. Prevents ectopic retrotransposition by regulating the levels of H3K4me3 in two non-LTR retrotransposons KARMA and LINE-1 (L1) and reinforcing their repressed states. The chain is Lysine-specific demethylase JMJ703 (JMJ703) from Oryza sativa subsp. japonica (Rice).